The primary structure comprises 833 residues: Enhancer of filamentation 1 (833 aa).

In terms of domain architecture, SH3 spans Ala3–Gly65. 7 positions are modified to phosphotyrosine: Tyr91, Tyr163, Tyr165, Tyr176, Tyr188, Tyr213, and Tyr222. A disordered region spans residues Glu237–Gly258. The span at Gln248–Gly258 shows a compositional bias: basic and acidic residues. Ser295 carries the phosphoserine modification. Disordered regions lie at residues Ser297–Tyr316, Glu326–Leu403, and Pro560–Ser623. The span at Gln304–Asp314 shows a compositional bias: polar residues. At Tyr316 the chain carries Phosphotyrosine. The span at Thr331 to Val343 shows a compositional bias: basic and acidic residues. Residues Asn350–Phe833 form an interacts with CTTN region. The Caspase cleavage related site motif lies at Asp359–Asp362. Position 368 is a phosphoserine (Ser368). The span at Ser368 to Ser396 shows a compositional bias: low complexity. Over residues His564–Gln586 the composition is skewed to polar residues. The segment at Phe709–Gly759 is divergent helix-loop-helix motif. The interval Phe709 to Phe833 is required for interaction with PLK1. Residue Ser779 is modified to Phosphoserine. Position 803 is a phosphothreonine (Thr803).

The protein belongs to the CAS family. Homodimer. Forms heterodimers with BCAR1/p130cas. Forms complexes with PTK2B/RAFTK, adapter protein CRKL and LYN kinase. Part of a complex composed of NEDD9, AURKA and CTTN; within the complex NEDD9 acts as a scaffold protein and is required for complex formation. Part of a ternary complex composed of SMAD3, ITCH/AIP4 and NEDD9/HEF1; within the complex NEDD9/HEF1 interacts (via N-terminus) with ITCH/AIP4 (via WW domains); the complex mediates ubiquitination and proteasomal degradation of NEDD9/HEF1. Interacts with SMAD3; the interaction promotes NEDD9 ubiquitination and proteasomal degradation. Interacts with ID2. Interacts with CTTN (via N-terminus). Interacts with MICAL. Interacts with TXNL4/DIM1. Interacts with BCAR3 (via Ras-GEF domain). Interacts with SH2D3C isoform 1 and isoform 2. Interacts with ECT2. Interacts with PTPN11/SHP-2 (via SH2 domains); the interaction is enhanced when NEDD9/CAS-L is tyrosine phosphorylated. Interacts (via C-terminus) with PLK1 (via polo box domains). Interacts with NKX2-5. Interacts with SMAD3; the interaction is inhibited by oxidation of NEDD9. Interacts with NEDD9/HEF1; interaction is induced by CXCL12 promotion of ABL-mediated phosphorylation of NEDD9/HEF1. Interacts (via SH3 domain) with PTK2/FAK. Interacts with FYN; in the presence of PTK2. Interacts with INPPL1/SHIP2. Post-translationally, polyubiquitinated by ITCH/AIP4, leading to proteasomal degradation. In terms of processing, PTK2/FAK1 phosphorylates the protein at the YDYVHL motif (conserved among all cas proteins) following integrin stimulation. The SRC family kinases (FYN, SRC, LCK and CRK) are recruited to the phosphorylated sites and can phosphorylate other tyrosine residues. Ligation of either integrin beta-1 or B-cell antigen receptor on tonsillar B-cells and B-cell lines promotes tyrosine phosphorylation and both integrin and BCR-mediated tyrosine phosphorylation requires an intact actin network. Phosphorylation is required to recruit NEDD9 to T-cell receptor microclusters at the periphery of newly formed immunological synapses. In fibroblasts transformation with oncogene v-ABL results in an increase in tyrosine phosphorylation. Transiently phosphorylated following CD3 cross-linking and this phosphorylated form binds to CRKL and C3G. A mutant lacking the SH3 domain is phosphorylated upon CD3 cross-linking but not upon integrin beta-1 cross-linking. Tyrosine phosphorylation occurs upon stimulation of the G-protein coupled C1a calcitonin receptor. Calcitonin-stimulated tyrosine phosphorylation is mediated by calcium- and protein kinase C-dependent mechanisms and requires the integrity of the actin cytoskeleton. Phosphorylation at Ser-368 induces proteasomal degradation. Phosphorylated by LYN. Phosphorylation at Ser-779 by CSNK1D or CSNK1E, or phosphorylation of Thr-803 by CSNK1E enhances the interaction of NEDD9 with PLK1. Expressed in splenic lymphocytes (at protein level). Expressed in T-cells (at protein level). Expressed in the thymus. Expressed throughout the brain however particularly abundant in the cortex and hippocampus.

It localises to the cytoplasm. The protein resides in the cell cortex. It is found in the nucleus. Its subcellular location is the golgi apparatus. The protein localises to the cell projection. It localises to the lamellipodium. The protein resides in the cell junction. It is found in the focal adhesion. Its subcellular location is the cytoskeleton. The protein localises to the spindle pole. It localises to the cilium. The protein resides in the cilium basal body. It is found in the basolateral cell membrane. Functionally, scaffolding protein which plays a central coordinating role for tyrosine-kinase-based signaling related to cell adhesion. As a focal adhesion protein, plays a role in embryonic fibroblast migration. May play an important role in integrin beta-1 or B cell antigen receptor (BCR) mediated signaling in B- and T-cells. Integrin beta-1 stimulation leads to recruitment of various proteins including CRKl and SHPTP2 to the tyrosine phosphorylated form. Promotes adhesion and migration of lymphocytes; as a result required for the correct migration of lymphocytes to the spleen and other secondary lymphoid organs. Plays a role in the organization of T-cell F-actin cortical cytoskeleton and the centralization of T-cell receptor microclusters at the immunological synapse. Negatively regulates cilia outgrowth in polarized cysts. Modulates cilia disassembly via activation of AURKA-mediated phosphorylation of HDAC6 and subsequent deacetylation of alpha-tubulin. Positively regulates RANKL-induced osteoclastogenesis. Required for the maintenance of hippocampal dendritic spines in the dentate gyrus and CA1 regions, thereby involved in spatial learning and memory. This is Enhancer of filamentation 1 from Mus musculus (Mouse).